A 427-amino-acid polypeptide reads, in one-letter code: Adenylosuccinate synthetase (427 aa).

GTP-binding positions include 12–18 and 40–42; these read GDEGKGK and GHT. The Proton acceptor role is filled by Asp-13. Mg(2+)-binding residues include Asp-13 and Gly-40. Residues 13-16, 38-41, Thr-128, Arg-142, Gln-223, Thr-238, and Arg-302 contribute to the IMP site; these read DEGK and NAGH. Catalysis depends on His-41, which acts as the Proton donor. 298–304 is a substrate binding site; sequence TTTGRPR. GTP is bound by residues Arg-304, 330 to 332, and 412 to 414; these read KLD and AVG.

This sequence belongs to the adenylosuccinate synthetase family. As to quaternary structure, homodimer. Mg(2+) serves as cofactor.

The protein localises to the cytoplasm. The catalysed reaction is IMP + L-aspartate + GTP = N(6)-(1,2-dicarboxyethyl)-AMP + GDP + phosphate + 2 H(+). It functions in the pathway purine metabolism; AMP biosynthesis via de novo pathway; AMP from IMP: step 1/2. In terms of biological role, plays an important role in the de novo pathway of purine nucleotide biosynthesis. Catalyzes the first committed step in the biosynthesis of AMP from IMP. This chain is Adenylosuccinate synthetase, found in Moorella thermoacetica (strain ATCC 39073 / JCM 9320).